Here is a 176-residue protein sequence, read N- to C-terminus: ATP-dependent protease subunit HslV (176 aa).

T2 is an active-site residue. The Na(+) site is built by A157, C160, and T163.

The protein belongs to the peptidase T1B family. HslV subfamily. In terms of assembly, a double ring-shaped homohexamer of HslV is capped on each side by a ring-shaped HslU homohexamer. The assembly of the HslU/HslV complex is dependent on binding of ATP.

It localises to the cytoplasm. It catalyses the reaction ATP-dependent cleavage of peptide bonds with broad specificity.. Its activity is regulated as follows. Allosterically activated by HslU binding. Functionally, protease subunit of a proteasome-like degradation complex believed to be a general protein degrading machinery. The protein is ATP-dependent protease subunit HslV of Buchnera aphidicola subsp. Schizaphis graminum (strain Sg).